Reading from the N-terminus, the 188-residue chain is Phosphoribosylglycinamide formyltransferase (188 aa).

Residue Gly-12–Asn-14 coordinates N(1)-(5-phospho-beta-D-ribosyl)glycinamide. (6R)-10-formyltetrahydrofolate contacts are provided by residues Lys-66, Met-91–Ile-94, and Asn-108. The active-site Proton donor is the His-110.

It belongs to the GART family.

The enzyme catalyses N(1)-(5-phospho-beta-D-ribosyl)glycinamide + (6R)-10-formyltetrahydrofolate = N(2)-formyl-N(1)-(5-phospho-beta-D-ribosyl)glycinamide + (6S)-5,6,7,8-tetrahydrofolate + H(+). Its pathway is purine metabolism; IMP biosynthesis via de novo pathway; N(2)-formyl-N(1)-(5-phospho-D-ribosyl)glycinamide from N(1)-(5-phospho-D-ribosyl)glycinamide (10-formyl THF route): step 1/1. Catalyzes the transfer of a formyl group from 10-formyltetrahydrofolate to 5-phospho-ribosyl-glycinamide (GAR), producing 5-phospho-ribosyl-N-formylglycinamide (FGAR) and tetrahydrofolate. In Staphylococcus aureus (strain Mu50 / ATCC 700699), this protein is Phosphoribosylglycinamide formyltransferase.